Here is a 384-residue protein sequence, read N- to C-terminus: Cysteine protease ATG4B (384 aa).

Residue cysteine 74 is the Nucleophile of the active site. Catalysis depends on residues aspartate 269 and histidine 271. Positions phenylalanine 379–leucine 382 match the LIR motif.

It belongs to the peptidase C54 family.

The protein localises to the cytoplasm. Its subcellular location is the cytosol. It localises to the cytoplasmic vesicle. It is found in the autophagosome. The protein resides in the endoplasmic reticulum. The protein localises to the mitochondrion. The enzyme catalyses [protein]-C-terminal L-amino acid-glycyl-phosphatidylethanolamide + H2O = [protein]-C-terminal L-amino acid-glycine + a 1,2-diacyl-sn-glycero-3-phosphoethanolamine. The catalysed reaction is [protein]-C-terminal L-amino acid-glycyl-phosphatidylserine + H2O = [protein]-C-terminal L-amino acid-glycine + a 1,2-diacyl-sn-glycero-3-phospho-L-serine. Functionally, cysteine protease that plays a key role in autophagy by mediating both proteolytic activation and delipidation of ATG8 family proteins. Required for canonical autophagy (macroautophagy), non-canonical autophagy as well as for mitophagy. The protease activity is required for proteolytic activation of ATG8 family proteins: cleaves the C-terminal amino acid of ATG8 proteins to reveal a C-terminal glycine. Exposure of the glycine at the C-terminus is essential for ATG8 proteins conjugation to phosphatidylethanolamine (PE) and insertion to membranes, which is necessary for autophagy. Protease activity is also required to counteract formation of high-molecular weight conjugates of ATG8 proteins (ATG8ylation): acts as a deubiquitinating-like enzyme that removes ATG8 conjugated to other proteins, such as ATG3. In addition to the protease activity, also mediates delipidation of ATG8 family proteins. Catalyzes delipidation of PE-conjugated forms of ATG8 proteins during macroautophagy. Also involved in non-canonical autophagy, a parallel pathway involving conjugation of ATG8 proteins to single membranes at endolysosomal compartments, by catalyzing delipidation of ATG8 proteins conjugated to phosphatidylserine (PS). The chain is Cysteine protease ATG4B from Xenopus laevis (African clawed frog).